We begin with the raw amino-acid sequence, 196 residues long: DnaA initiator-associating protein DiaA (196 aa).

The SIS domain maps to 34–196; it reads LVQSLLNGNK…DNTLFPHQAD (163 aa).

The protein belongs to the SIS family. DiaA subfamily. Homotetramer; dimer of dimers.

In terms of biological role, required for the timely initiation of chromosomal replication via direct interactions with the DnaA initiator protein. The protein is DnaA initiator-associating protein DiaA of Edwardsiella ictaluri (strain 93-146).